Here is a 318-residue protein sequence, read N- to C-terminus: Geranylfarnesyl diphosphate synthase (318 aa).

Positions 31, 34, and 65 each coordinate isopentenyl diphosphate. Asp-72 and Asp-76 together coordinate Mg(2+). Residue Arg-81 participates in an all-trans-polyprenyl diphosphate binding. Residue Arg-82 participates in isopentenyl diphosphate binding. An all-trans-polyprenyl diphosphate is bound by residues Lys-166, Thr-167, and Gln-204.

Belongs to the FPP/GGPP synthase family. Homodimer. Requires Mg(2+) as cofactor.

The catalysed reaction is isopentenyl diphosphate + (2E,6E,10E)-geranylgeranyl diphosphate = (2E,6E,10E,14E)-geranylfarnesyl diphosphate + diphosphate. Functionally, probably involved in biosynthesis of the precursor for C25 (sesterterpanyl chain) moiety of C25-C25 diether (2,3-di-O-sesterterpanyl-sn-glycero) membrane lipid. Catalyzes the condensation of isopentenyl pyrophosphate with the allylic pyrophosphates to yield all-trans geranylfarnesyl diphosphate (GFPP). Geranylgeranyl diphosphate (GGPP) is the preferred substrate, however methylallyl diphosphate (DMAPP), farnesyl diphosphate (FPP) and geranyl diphosphate (GPP) can also be used as allylic substrate. This Aeropyrum pernix protein is Geranylfarnesyl diphosphate synthase (fgs).